Here is a 293-residue protein sequence, read N- to C-terminus: Formamidopyrimidine-DNA glycosylase (293 aa).

Pro2 serves as the catalytic Schiff-base intermediate with DNA. Catalysis depends on Glu3, which acts as the Proton donor. The active-site Proton donor; for beta-elimination activity is Lys58. The DNA site is built by His104, Arg123, and Arg166. The FPG-type zinc finger occupies 257–293 (KVYDREGEPCPTLRCKGHVQRIVQAGRSTFFCATCQR). Catalysis depends on Arg283, which acts as the Proton donor; for delta-elimination activity.

This sequence belongs to the FPG family. Monomer. Requires Zn(2+) as cofactor.

It catalyses the reaction Hydrolysis of DNA containing ring-opened 7-methylguanine residues, releasing 2,6-diamino-4-hydroxy-5-(N-methyl)formamidopyrimidine.. The catalysed reaction is 2'-deoxyribonucleotide-(2'-deoxyribose 5'-phosphate)-2'-deoxyribonucleotide-DNA = a 3'-end 2'-deoxyribonucleotide-(2,3-dehydro-2,3-deoxyribose 5'-phosphate)-DNA + a 5'-end 5'-phospho-2'-deoxyribonucleoside-DNA + H(+). Involved in base excision repair of DNA damaged by oxidation or by mutagenic agents. Acts as a DNA glycosylase that recognizes and removes damaged bases. Has a preference for oxidized purines, such as 7,8-dihydro-8-oxoguanine (8-oxoG). Has AP (apurinic/apyrimidinic) lyase activity and introduces nicks in the DNA strand. Cleaves the DNA backbone by beta-delta elimination to generate a single-strand break at the site of the removed base with both 3'- and 5'-phosphates. This is Formamidopyrimidine-DNA glycosylase from Azorhizobium caulinodans (strain ATCC 43989 / DSM 5975 / JCM 20966 / LMG 6465 / NBRC 14845 / NCIMB 13405 / ORS 571).